Consider the following 1487-residue polypeptide: Secretory phospholipase A2 receptor (1487 aa).

The signal sequence occupies residues 1-26 (MVQWLAMLQLLWLQQLLLLGIHQGIA). Topologically, residues 27 to 1396 (QDLTHIQEPS…AQPEKGLSHS (1370 aa)) are extracellular. Residues 42 to 165 (KGIFIIQSES…SSGGDICEHP (124 aa)) enclose the Ricin B-type lectin domain. Disulfide bonds link cysteine 55–cysteine 68, cysteine 93–cysteine 110, cysteine 181–cysteine 207, and cysteine 195–cysteine 222. N-linked (GlcNAc...) asparagine glycosylation occurs at asparagine 97. The Fibronectin type-II domain occupies 176 to 224 (AHGMPCVFPFQFKGHWHHDCIREGQKEHLLWCATTSRYEEDEKWGFCPD). An N-linked (GlcNAc...) asparagine glycan is attached at asparagine 239. C-type lectin domains follow at residues 241–357 (SSRI…YICK), 387–504 (FNRK…YICK), 524–643 (HGRF…MSLC), 673–797 (GLAS…WICR), 819–938 (YQNA…SICK), and 964–1095 (FNYK…GFVC). Cystine bridges form between cysteine 263–cysteine 356, cysteine 333–cysteine 348, cysteine 408–cysteine 503, cysteine 480–cysteine 495, cysteine 617–cysteine 634, cysteine 699–cysteine 796, cysteine 774–cysteine 788, cysteine 840–cysteine 937, cysteine 914–cysteine 929, and cysteine 1066–cysteine 1086. Residue asparagine 928 is glycosylated (N-linked (GlcNAc...) asparagine). N-linked (GlcNAc...) asparagine glycans are attached at residues asparagine 1107, asparagine 1122, and asparagine 1131. 2 consecutive C-type lectin domains span residues 1120–1231 (YGNR…GAIC) and 1256–1377 (FKGN…FICK). 3 disulfides stabilise this stretch: cysteine 1208–cysteine 1222, cysteine 1279–cysteine 1376, and cysteine 1353–cysteine 1368. The helical transmembrane segment at 1397-1417 (IVPVTVTLTLIIALGIFMLCF) threads the bilayer. Over 1418–1487 (WIYKQKSDIF…HKGRPICISP (70 aa)) the chain is Cytoplasmic. The Endocytosis signal motif lies at 1435-1441 (GSYYPTL). Over residues 1463-1475 (DEEVRDAPATESK) the composition is skewed to basic and acidic residues. Positions 1463-1487 (DEEVRDAPATESKRGHKGRPICISP) are disordered.

In terms of assembly, interacts with sPLA2-IB/PLA2G1B; this interaction mediates intracellular signaling as well as clearance of extracellular sPLA2-IB/PLA2G1B via endocytotic pathway. Interacts with sPLA2-X/PLA2G10; this interaction mediates sPLA2-X/PLA2G10 clearance and inactivation. Post-translationally, the secretory phospholipase A2 receptor form may be produced by the action of metalloproteinases. It contains all extracellular domains and only lacks transmembrane and cytosolic regions. It is however unclear whether this form is produced by proteolytic cleavage as suggested by some experiments reported by PubMed:11830583, or by alternative splicing. Widely expressed. Present in type II alveolar epithelial cells and a subset of splenic lymphocytes. Present at the surface of polymorphonuclear neutrophils (at protein level).

Its subcellular location is the cell membrane. It is found in the secreted. Receptor for secretory phospholipase A2 (sPLA2). Acts as a receptor for phospholipases sPLA2-IB/PLA2G1B, sPLA2-X/PLA2G10 and, with lower affinity, sPLA2-IIA/PLA2G2A. Also able to bind to snake PA2-like toxins. Although its precise function remains unclear, binding of sPLA2 to its receptor participates in both positive and negative regulation of sPLA2 functions as well as clearance of sPLA2. Binding of sPLA2-IB/PLA2G1B induces various effects depending on the cell type, such as activation of the mitogen-activated protein kinase (MAPK) cascade to induce cell proliferation, the production of lipid mediators, selective release of arachidonic acid in bone marrow-derived mast cells. In neutrophils, binding of sPLA2-IB/PLA2G1B can activate p38 MAPK to stimulate elastase release and cell adhesion. May be involved in responses in pro-inflammatory cytokine productions during endotoxic shock. Also has endocytic properties and rapidly internalizes sPLA2 ligands, which is particularly important for the clearance of extracellular sPLA2s to protect their potent enzymatic activities. The soluble secretory phospholipase A2 receptor form is circulating and acts as a negative regulator of sPLA2 functions by blocking the biological functions of sPLA2-IB/PLA2G1B and sPLA2-X/PLA2G10. In podocytes, binding of sPLA2-IB/PLA2G1B can regulate podocyte survival and glomerular homeostasis. This chain is Secretory phospholipase A2 receptor (Pla2r1), found in Mus musculus (Mouse).